Here is a 342-residue protein sequence, read N- to C-terminus: N-acetyl-gamma-glutamyl-phosphate reductase (342 aa).

Cys149 is an active-site residue.

Belongs to the NAGSA dehydrogenase family. Type 1 subfamily.

It localises to the cytoplasm. It carries out the reaction N-acetyl-L-glutamate 5-semialdehyde + phosphate + NADP(+) = N-acetyl-L-glutamyl 5-phosphate + NADPH + H(+). It functions in the pathway amino-acid biosynthesis; L-arginine biosynthesis; N(2)-acetyl-L-ornithine from L-glutamate: step 3/4. Catalyzes the NADPH-dependent reduction of N-acetyl-5-glutamyl phosphate to yield N-acetyl-L-glutamate 5-semialdehyde. This chain is N-acetyl-gamma-glutamyl-phosphate reductase, found in Rhodobacter capsulatus (strain ATCC BAA-309 / NBRC 16581 / SB1003).